The primary structure comprises 160 residues: Ureidoglycolate lyase (160 aa).

It belongs to the ureidoglycolate lyase family. As to quaternary structure, homodimer. The cofactor is Ni(2+).

It carries out the reaction (S)-ureidoglycolate = urea + glyoxylate. The protein operates within nitrogen metabolism; (S)-allantoin degradation. In terms of biological role, catalyzes the catabolism of the allantoin degradation intermediate (S)-ureidoglycolate, generating urea and glyoxylate. Involved in the utilization of allantoin as nitrogen source. The chain is Ureidoglycolate lyase from Salmonella enteritidis.